The following is a 301-amino-acid chain: tRNA dimethylallyltransferase 1 (301 aa).

Glycine 11–threonine 18 lines the ATP pocket. Substrate is bound at residue threonine 13–threonine 18. Residues aspartate 36–glutamine 39 are interaction with substrate tRNA.

It belongs to the IPP transferase family. Monomer. Mg(2+) serves as cofactor.

The enzyme catalyses adenosine(37) in tRNA + dimethylallyl diphosphate = N(6)-dimethylallyladenosine(37) in tRNA + diphosphate. Functionally, catalyzes the transfer of a dimethylallyl group onto the adenine at position 37 in tRNAs that read codons beginning with uridine, leading to the formation of N6-(dimethylallyl)adenosine (i(6)A). The protein is tRNA dimethylallyltransferase 1 of Bacteroides fragilis (strain YCH46).